The chain runs to 184 residues: UPF0316 protein BLi00691/BL01474 (184 aa).

3 helical membrane passes run Gly9–Leu29, Leu41–Leu61, and Ile67–Ile87.

The protein belongs to the UPF0316 family.

It is found in the cell membrane. This Bacillus licheniformis (strain ATCC 14580 / DSM 13 / JCM 2505 / CCUG 7422 / NBRC 12200 / NCIMB 9375 / NCTC 10341 / NRRL NRS-1264 / Gibson 46) protein is UPF0316 protein BLi00691/BL01474.